The chain runs to 166 residues: Phospholipase A2 inhibitor clone 05 (166 aa).

An N-terminal signal peptide occupies residues 1 to 19; that stretch reads MRLILLSSLLLLGIFLADG. One can recognise a C-type lectin domain in the interval 46–161; sequence LKGAFLTVHR…CDDNLLVVCE (116 aa). Disulfide bonds link cysteine 83–cysteine 160 and cysteine 138–cysteine 152. N-linked (GlcNAc...) asparagine glycosylation is present at asparagine 122.

Belongs to the alpha-type phospholipase A2 inhibitor family. Homotrimer; non-covalently linked. As to expression, expressed by the liver.

Its subcellular location is the secreted. Its function is as follows. This phospholipase A2 inhibitor binds directly phospholipase A2 in the presence or absence of calcium. This Bothrops moojeni (Lance-headed viper) protein is Phospholipase A2 inhibitor clone 05.